The chain runs to 330 residues: Ribosomal RNA small subunit methyltransferase H (330 aa).

Residues 40-42 (GGY), D58, F85, D101, and Q108 each bind S-adenosyl-L-methionine.

The protein belongs to the methyltransferase superfamily. RsmH family.

It localises to the cytoplasm. The catalysed reaction is cytidine(1402) in 16S rRNA + S-adenosyl-L-methionine = N(4)-methylcytidine(1402) in 16S rRNA + S-adenosyl-L-homocysteine + H(+). Functionally, specifically methylates the N4 position of cytidine in position 1402 (C1402) of 16S rRNA. The sequence is that of Ribosomal RNA small subunit methyltransferase H from Roseobacter denitrificans (strain ATCC 33942 / OCh 114) (Erythrobacter sp. (strain OCh 114)).